Consider the following 509-residue polypeptide: Src substrate cortactin (509 aa).

The segment at 1 to 28 (MWKASAGHAVSITQDDGGADDWETDPDF) is disordered. Residues 17-28 (GGADDWETDPDF) are compositionally biased toward acidic residues. Cortactin repeat units lie at residues 80 to 116 (ASHGYGGKFGVEQDRMDKSAVGHEYQSKLSKHCSQVD), 117 to 153 (SVRGFGGKFGVQMDRVDQSAVGFEYQGKTEKHASQKD), 154 to 190 (YSSGFGGKYGVQADRVDKSAVGFDYQGKTEKHESQKD), 191 to 227 (YSKGFGGKYGIDKDKVDKSAVGFEYQGKTEKHESQKD), and 228 to 264 (YVKGFGGKFGVQTDRQDKCALGWDHQEKLQLHESQKD). Lys-87 and Lys-107 each carry N6-acetyllysine. Ser-113 bears the Phosphoserine mark. At Arg-119 the chain carries Omega-N-methylarginine. Lys-124 carries the N6-acetyllysine modification. Lys-144 carries the post-translational modification N6-acetyllysine; alternate. Residue Lys-144 forms a Glycyl lysine isopeptide (Lys-Gly) (interchain with G-Cter in SUMO1); alternate linkage. Lys-144 is covalently cross-linked (Glycyl lysine isopeptide (Lys-Gly) (interchain with G-Cter in SUMO2); alternate). Residue Ser-150 is modified to Phosphoserine. An N6-acetyllysine mark is found at Lys-152, Lys-161, and Lys-171. At Lys-181 the chain carries N6-acetyllysine; alternate. Lys-181 is covalently cross-linked (Glycyl lysine isopeptide (Lys-Gly) (interchain with G-Cter in SUMO1); alternate). Lys-181 participates in a covalent cross-link: Glycyl lysine isopeptide (Lys-Gly) (interchain with G-Cter in SUMO2); alternate. N6-acetyllysine is present on residues Lys-193 and Lys-198. A Glycyl lysine isopeptide (Lys-Gly) (interchain with G-Cter in SUMO1) cross-link involves residue Lys-218. At Lys-235 the chain carries N6-acetyllysine. Ser-261 carries the post-translational modification Phosphoserine. The Cortactin 6; truncated repeat unit spans residues 265–287 (YAKGFGGKYGVQKDRMDKNASTF). N6-acetyllysine is present on residues Lys-267, Lys-272, Lys-277, and Lys-309. Residues 311-364 (SNIRANFENLAKEREQEDRRKAEAERAQRMAQERQEQEEARRKLEEQARAKKQT) adopt a coiled-coil conformation. Residues 318 to 409 (ENLAKEREQE…EPEPEYSTEA (92 aa)) are disordered. Basic and acidic residues predominate over residues 320 to 359 (LAKEREQEDRRKAEAERAQRMAQERQEQEEARRKLEEQAR). Residue Thr-364 is modified to Phosphothreonine. Phosphoserine occurs at positions 368, 370, 380, and 381. Tyr-384 bears the Phosphotyrosine; by FAK1 mark. The segment covering 393–406 (EPSYGSSEPEPEYS) has biased composition (low complexity). The residue at position 405 (Tyr-405) is a Phosphotyrosine. Position 406 is a phosphoserine (Ser-406). Phosphotyrosine; by FAK1 occurs at positions 429 and 445. Phosphotyrosine; by SRC occurs at positions 445 and 448. Positions 451 to 509 (DLGITAIALYDYQAAGDDEISFDPDDVITNIEMIDDGWWRGVCKGRYGLFPANYVELRQ) constitute an SH3 domain.

As to quaternary structure, part of a complex composed of NEDD9, AURKA and CTTN; within the complex NEDD9 acts as a scaffold protein and is required for complex formation. Interacts (via N-terminus) with NEDD9. Identified in a complex containing FGFR4, NCAM1, CDH2, PLCG1, FRS2, SRC, SHC1, GAP43 and CTTN. Forms a complex with ABL1 and MYLK. Interacts with SHANK2 and SHANK3 (via its SH3 domain). Interacts with PLXDC2 and SRCIN1. Interacts with SAMSN1 (via SH3 domain). Interacts (via SH3 domain) with ASAP1 (via Pro-rich region). Interacts with FER. Interacts with FGD1. Interacts with ABL2. Interacts with CTTNBP2NL; this interaction may target CTTN to stress fibers. Interacts with CTTNBP2; this interaction may target CTTN at the cell cortex or dendritic spines. Interacts (via SH3 domain) with DNM2. Interacts with ACTN1. Interacts with KCNA2 (via non-phosphorylated C-terminus). Interacts with PTK2/FAK1. Interacts with KCNH1. Interacts (via SH3 domain) with DIP2A (via N-terminus); the interaction enhances CTTN acetylation and is required for proper synaptic transmission. Interacts with XIRP1 (via N-terminus); the interaction promotes CTTN localization to intercalated disks in cardiomyocytes. Acetylated. In terms of processing, phosphorylated by FER. Phosphorylated in response to FGR activation. Phosphorylation by SRC promotes MYLK binding. Tyrosine phosphorylation in transformed cells may contribute to cellular growth regulation and transformation. Phosphorylated by PKN2 at both serine and threonine residues in a GTP-bound Rac1-dependent manner in hyaluronan-induced astrocytes and hence down-regulated CTTN ability to associate with filamentous actin. Phosphorylated on tyrosine residues in response to CHRM1 activation. Phosphorylated by PTK2/FAK1 in response to cell adhesion. As to expression, detected in liver (at protein level).

Its subcellular location is the cytoplasm. The protein resides in the cytoskeleton. It localises to the cell projection. It is found in the lamellipodium. The protein localises to the ruffle. Its subcellular location is the dendrite. The protein resides in the cell membrane. It localises to the podosome. It is found in the cell junction. The protein localises to the focal adhesion. Its subcellular location is the membrane. The protein resides in the clathrin-coated pit. It localises to the dendritic spine. It is found in the cell cortex. The protein localises to the endoplasmic reticulum. In terms of biological role, contributes to the organization of the actin cytoskeleton and cell shape. Plays a role in the formation of lamellipodia and in cell migration. Plays a role in the regulation of neuron morphology, axon growth and formation of neuronal growth cones. Through its interaction with CTTNBP2, involved in the regulation of neuronal spine density. Plays a role in focal adhesion assembly and turnover. In complex with ABL1 and MYLK regulates cortical actin-based cytoskeletal rearrangement critical to sphingosine 1-phosphate (S1P)-mediated endothelial cell (EC) barrier enhancement. Plays a role in intracellular protein transport and endocytosis, and in modulating the levels of potassium channels present at the cell membrane. Plays a role in receptor-mediated endocytosis via clathrin-coated pits. Required for stabilization of KCNH1 channels at the cell membrane. The chain is Src substrate cortactin from Rattus norvegicus (Rat).